Consider the following 158-residue polypeptide: Protein BTG2 (158 aa).

Position 147 is a phosphoserine; by MAPK1 and MAPK3 (S147). S149 carries the phosphoserine; by MAPK14 modification.

The protein belongs to the BTG family. As to quaternary structure, interacts with PRKCABP. Interacts with CNOT7 and CNOT8; indicative for an association with the CCR4-NOT complex. Interacts with PIN1, inducing mitochondrial depolarization. In terms of processing, phosphorylated at Ser-147 by MAPK1/ERK2 and MAPK3/ERK1, and at Ser-149 by MAPK14, leading to PIN1-binding and mitochondrial depolarization. In brain at embryonic day 13.5, placenta, amnion, and spleen, which are proliferating and/or differentiating.

Anti-proliferative protein; the function is mediated by association with deadenylase subunits of the CCR4-NOT complex. Activates mRNA deadenylation in a CNOT6 and CNOT7-dependent manner. In vitro can inhibit deadenylase activity of CNOT7 and CNOT8. Involved in cell cycle regulation. Could be involved in the growth arrest and differentiation of the neuronal precursors. Modulates transcription regulation mediated by ESR1. Involved in mitochondrial depolarization and neurite outgrowth. The chain is Protein BTG2 (Btg2) from Rattus norvegicus (Rat).